The chain runs to 186 residues: ATP-dependent protease subunit HslV (186 aa).

Threonine 14 is a catalytic residue. Na(+) is bound by residues alanine 168, cysteine 171, and threonine 174.

This sequence belongs to the peptidase T1B family. HslV subfamily. A double ring-shaped homohexamer of HslV is capped on each side by a ring-shaped HslU homohexamer. The assembly of the HslU/HslV complex is dependent on binding of ATP.

It localises to the cytoplasm. It carries out the reaction ATP-dependent cleavage of peptide bonds with broad specificity.. Allosterically activated by HslU binding. In terms of biological role, protease subunit of a proteasome-like degradation complex believed to be a general protein degrading machinery. This Bradyrhizobium diazoefficiens (strain JCM 10833 / BCRC 13528 / IAM 13628 / NBRC 14792 / USDA 110) protein is ATP-dependent protease subunit HslV.